A 1234-amino-acid polypeptide reads, in one-letter code: DNA-directed RNA polymerase subunit beta (1234 aa).

This sequence belongs to the RNA polymerase beta chain family. As to quaternary structure, the RNAP catalytic core consists of 2 alpha, 1 beta, 1 beta' and 1 omega subunit. When a sigma factor is associated with the core the holoenzyme is formed, which can initiate transcription.

It catalyses the reaction RNA(n) + a ribonucleoside 5'-triphosphate = RNA(n+1) + diphosphate. Functionally, DNA-dependent RNA polymerase catalyzes the transcription of DNA into RNA using the four ribonucleoside triphosphates as substrates. The protein is DNA-directed RNA polymerase subunit beta of Clostridium perfringens (strain SM101 / Type A).